The sequence spans 279 residues: Movement protein (279 aa).

Residues 246 to 279 (SESEELNVESPPAAIGSSSASRSEAFRPQVVNGL) form a disordered region. Over residues 254-268 (ESPPAAIGSSSASRS) the composition is skewed to low complexity.

It belongs to the cucumovirus movement protein family.

It is found in the host cell junction. The protein localises to the host plasmodesma. Transports viral genome to neighboring plant cells directly through plasmosdesmata, without any budding. The movement protein allows efficient cell to cell propagation, by bypassing the host cell wall barrier. Acts by forming a tubular structure at the host plasmodesmata, enlarging it enough to allow free passage of virion capsids. The chain is Movement protein from Cucumber mosaic virus (strain O) (CMV).